The following is a 420-amino-acid chain: E3 ubiquitin-protein ligase pellino homolog 2 (420 aa).

The 188-residue stretch at 15–202 folds into the FHA; atypical domain; it reads EPVKYGELVV…MHPRGGFTEE (188 aa).

The protein belongs to the pellino family. As to quaternary structure, interacts with TRAF6, IRAK1, IRAK4 and MAP3K7. Interacts with BCL10; this interaction is impaired by SOCS3. In terms of processing, phosphorylated by IRAK1 and IRAK4 enhancing its E3 ligase activity.

The enzyme catalyses S-ubiquitinyl-[E2 ubiquitin-conjugating enzyme]-L-cysteine + [acceptor protein]-L-lysine = [E2 ubiquitin-conjugating enzyme]-L-cysteine + N(6)-ubiquitinyl-[acceptor protein]-L-lysine.. It functions in the pathway protein modification; protein ubiquitination. E3 ubiquitin ligase catalyzing the covalent attachment of ubiquitin moieties onto substrate proteins. Involved in the TLR and IL-1 signaling pathways via interaction with the complex containing IRAK kinases and TRAF6. Mediates IL1B-induced IRAK1 'Lys-63'-linked polyubiquitination and possibly 'Lys-48'-linked ubiquitination. May be important for LPS- and IL1B-induced MAP3K7-dependent, but not MAP3K3-dependent, NF-kappa-B activation. Can activate the MAP (mitogen activated protein) kinase pathway leading to activation of ELK1. This Homo sapiens (Human) protein is E3 ubiquitin-protein ligase pellino homolog 2 (PELI2).